The sequence spans 543 residues: Cytochrome P450 monooxygenase CYP1 (543 aa).

The helical transmembrane segment at 40–60 (SSFFTRILIAFIGLCLLSIFS) threads the bilayer. 2 N-linked (GlcNAc...) asparagine glycosylation sites follow: Asn-210 and Asn-367. Position 478 (Cys-478) interacts with heme. Residue Asn-517 is glycosylated (N-linked (GlcNAc...) asparagine).

This sequence belongs to the cytochrome P450 family. Heme serves as cofactor.

The protein localises to the membrane. It participates in secondary metabolite biosynthesis. Its function is as follows. Cytochrome P450 monooxygenase; part of the gene cluster that mediates the biosynthesis of a tyrosine-derived cytochalasan acting as a fungal signal recognized by resistant rice plants and leads to avirulence in Pi33 resistant rice cultivars. The first step in the pathway is catalyzed by the hybrid PKS-NRPS ACE1, assisted by the enoyl reductase RAP1, that are responsible for fusion of the tyrosine precursor and the polyketide backbone. The polyketide synthase module (PKS) of ACE1 is responsible for the synthesis of the polyketide backbone and the downstream nonribosomal peptide synthetase (NRPS) amidates the carboxyl end of the polyketide with the tyrosine precursor. Because ACE1 lacks a designated enoylreductase (ER) domain, the required activity is provided the enoyl reductase RAP1. Reduction by the hydrolyase ORFZ, followed by dehydration and intra-molecular Diels-Alder cyclization by the Diels-Alderase ORF3 then yield the required isoindolone-fused macrocycle. A number of oxidative steps catalyzed by the tailoring enzymes identified within the cluster, including cytochrome P450 monooxygenases CYP1 to CYP4, the FAD-linked oxidoreductase OXR2 and the short-chain dehydrogenase/reductase OXR1, are further required to afford the final cytochalasans that confer avirulence and which have still to be identified. The monooxygenase CYP1 has been shown to be a site-selective C-18 hydroxylase whereas the function of CYP3 is the site-selective epoxidation of the C-6/C-7 olefin that is present in some intermediate compounds. Finally, SYN2 and RAP2 are not required for avirulence in Pi33 resistant rice cultivars. This is Cytochrome P450 monooxygenase CYP1 from Pyricularia oryzae (strain 70-15 / ATCC MYA-4617 / FGSC 8958) (Rice blast fungus).